An 810-amino-acid chain; its full sequence is MTTLKLDTLSDRIKAHKNALVHIVKPPVCTERAQHYTEMYQQHLDKPIPVRRALALAHHLANRTIWIKHDELIIGNQASEVRAAPIFPEYTVSWIEKEIDDLADRPGAGFAVSEENKRVLHEVCPWWRGQTVQDRCYGMFTDEQKGLLATGIIKAEGNMTSGDAHLAVNFPLLLEKGLDGLREEVAERRSRINLTVLEDLHGEQFLKAIDIVLVAVSEHIERFAALAREMAATETRESRRDELLAMAENCDLIAHQPPQTFWQALQLCYFIQLILQIESNGHSVSFGRMDQYLYPYYRRDVELNQTLDREHAIEMLHSCWLKLLEVNKIRSGSHSKASAGSPLYQNVTIGGQNLVDGQPMDAVNPLSYAILESCGRLRSTQPNLSVRYHAGMSNDFLDACVQVIRCGFGMPAFNNDEIVIPEFIKLGIEPQDAYDYAAIGCIETAVGGKWGYRCTGMSFINFARVMLAALEGGHDATSGKVFLPQEKALSAGNFNNFDEVMDAWDTQIRYYTRKSIEIEYVVDTMLEENVHDILCSALVDDCIERAKSIKQGGAKYDWVSGLQVGIANLGNSLAAVKKLVFEQGAIGQQQLAAALADDFDGLTHEQLRQRLINGAPKYGNDDDTVDTLLARAYQTYIDELKQYHNPRYGRGPVGGNYYAGTSSISANVPFGAQTMATPDGRKAHTPLAEGASPASGTDHLGPTAVIGSVGKLPTAAILGGVLLNQKLNPATLENESDKQKLMILLRTFFEVHKGWHIQYNIVSRETLLDAKKHPDQYRDLVVRVAGYSAFFTALSPDAQDDIIARTEHML.

A PFL domain is found at 11-682; that stretch reads DRIKAHKNAL…QTMATPDGRK (672 aa). A disordered region spans residues 677–699; it reads TPDGRKAHTPLAEGASPASGTDH. One can recognise a Glycine radical domain in the interval 689-810; sequence EGASPASGTD…DIIARTEHML (122 aa). At G786 the chain carries Glycine radical.

It belongs to the glycyl radical enzyme (GRE) family.

In terms of biological role, probably shows dehydratase activity. This Escherichia coli (strain K12) protein is Probable dehydratase YbiW (ybiW).